The sequence spans 201 residues: Large ribosomal subunit protein uL4 (201 aa).

The tract at residues 43-66 is disordered; it reads TRAQKTRSEVSGGGKKPWRQKGTG.

It belongs to the universal ribosomal protein uL4 family. In terms of assembly, part of the 50S ribosomal subunit.

Functionally, one of the primary rRNA binding proteins, this protein initially binds near the 5'-end of the 23S rRNA. It is important during the early stages of 50S assembly. It makes multiple contacts with different domains of the 23S rRNA in the assembled 50S subunit and ribosome. Its function is as follows. Forms part of the polypeptide exit tunnel. In Tolumonas auensis (strain DSM 9187 / NBRC 110442 / TA 4), this protein is Large ribosomal subunit protein uL4.